The sequence spans 62 residues: MGMRMMFVVFLLVVFASSVTLDRASYGRYASPVDRASALIAQAILRDCCSNPPCAHNNPDCR.

A signal peptide spans 1–18; that stretch reads MGMRMMFVVFLLVVFASS. The propeptide occupies 19–45; that stretch reads VTLDRASYGRYASPVDRASALIAQAIL. Cystine bridges form between C48–C54 and C49–C61.

This sequence belongs to the conotoxin A superfamily. The toxin is inactive on the alpha-3-beta-2 nAChR when the disulfide bond connectivity is C1-C4 and C2-C3 (ViIA-I) (IC(50)&gt;10000 nM). Expressed by the venom duct.

It localises to the secreted. Its function is as follows. Alpha-conotoxins act on postsynaptic membranes, they bind to the nicotinic acetylcholine receptors (nAChR) and thus inhibit them. This toxin selectively inhibits nicotinic acetylcholine receptor (nAChR) alpha-3-beta-2 subtype (IC(50)=845.5 nM). The protein is Alpha-conotoxin ViIA of Conus virgo (Virgin cone).